Consider the following 73-residue polypeptide: Beta-defensin 10 (73 aa).

Residues 1–23 form the signal peptide; the sequence is MRTLCSLLLICCLLFSYTTPAVG. Intrachain disulfides connect C37–C66, C44–C59, and C49–C67.

Belongs to the beta-defensin family. Expressed in both adult and neonate brain, and very weakly in kidneys, epididymis, and testis.

It is found in the secreted. Functionally, has antibacterial activity. The polypeptide is Beta-defensin 10 (Defb10) (Mus musculus (Mouse)).